The sequence spans 26 residues: Thrombopoietin (26 aa).

The protein belongs to the EPO/TPO family.

Its subcellular location is the secreted. Lineage-specific cytokine affecting the proliferation and maturation of megakaryocytes from their committed progenitor cells. It acts at a late stage of megakaryocyte development. It may be the major physiological regulator of circulating platelets. The polypeptide is Thrombopoietin (THPO) (Sus scrofa (Pig)).